The sequence spans 221 residues: 3-isopropylmalate dehydratase small subunit (221 aa).

The protein belongs to the LeuD family. LeuD type 1 subfamily. As to quaternary structure, heterodimer of LeuC and LeuD.

It catalyses the reaction (2R,3S)-3-isopropylmalate = (2S)-2-isopropylmalate. The protein operates within amino-acid biosynthesis; L-leucine biosynthesis; L-leucine from 3-methyl-2-oxobutanoate: step 2/4. Its function is as follows. Catalyzes the isomerization between 2-isopropylmalate and 3-isopropylmalate, via the formation of 2-isopropylmaleate. This chain is 3-isopropylmalate dehydratase small subunit, found in Nitrosomonas europaea (strain ATCC 19718 / CIP 103999 / KCTC 2705 / NBRC 14298).